We begin with the raw amino-acid sequence, 411 residues long: F-box protein At4g19940 (411 aa).

An F-box domain is found at 29–75 (RQPIPEIPFDLVIEILTRLPAKSLMRFKSVSKLWSSLICSRNFTNRL).

This Arabidopsis thaliana (Mouse-ear cress) protein is F-box protein At4g19940.